The primary structure comprises 36 residues: Asteropin-A (36 aa).

Intrachain disulfides connect cysteine 2–cysteine 18, cysteine 9–cysteine 25, and cysteine 17–cysteine 35.

Its function is as follows. Sialidase inhibitor. Competitively inhibits bacterial sialidases, but not viral sialidases. Does not inhibit glycosidases or proteases. Has no antitumor activity. This chain is Asteropin-A, found in Asteropus simplex (Marine sponge).